The chain runs to 318 residues: MKPLNIIFAGTPDFAARHLQALINSHHNVIAVYTQPDRPAGRGKKLTASPVKELAVSHDIPVYQPGSLRKEPAQQELAALNADIMVVVAYGLILPKVVLDTPRLGCINVHGSILPRWRGAAPIQRALWAGDKETGVTIMQMDVGLDTGDMLLKTYLPIEDDDTSATLYEKLALQGPDALLQALEGLANGTLTAEKQDEVLANYAEKLSKEEARLDWRKSATQLWQEVRAFNPWPVSYFEHQGNTIKVWQTQVSTTSSNAAPGTIISASKKGIEVATGDGVLTLLSMQLPGKKPLSVADILNARGDWFTPNTRLNNEAQ.

112–115 (SILP) provides a ligand contact to (6S)-5,6,7,8-tetrahydrofolate.

The protein belongs to the Fmt family.

The enzyme catalyses L-methionyl-tRNA(fMet) + (6R)-10-formyltetrahydrofolate = N-formyl-L-methionyl-tRNA(fMet) + (6S)-5,6,7,8-tetrahydrofolate + H(+). Attaches a formyl group to the free amino group of methionyl-tRNA(fMet). The formyl group appears to play a dual role in the initiator identity of N-formylmethionyl-tRNA by promoting its recognition by IF2 and preventing the misappropriation of this tRNA by the elongation apparatus. This Shewanella sp. (strain ANA-3) protein is Methionyl-tRNA formyltransferase.